Consider the following 157-residue polypeptide: SsrA-binding protein (157 aa).

The disordered stretch occupies residues 128-157 (LARGKKQHDKRAAEKERDWEREKQRVMRRG). Residues 137-157 (KRAAEKERDWEREKQRVMRRG) show a composition bias toward basic and acidic residues.

Belongs to the SmpB family.

Its subcellular location is the cytoplasm. Its function is as follows. Required for rescue of stalled ribosomes mediated by trans-translation. Binds to transfer-messenger RNA (tmRNA), required for stable association of tmRNA with ribosomes. tmRNA and SmpB together mimic tRNA shape, replacing the anticodon stem-loop with SmpB. tmRNA is encoded by the ssrA gene; the 2 termini fold to resemble tRNA(Ala) and it encodes a 'tag peptide', a short internal open reading frame. During trans-translation Ala-aminoacylated tmRNA acts like a tRNA, entering the A-site of stalled ribosomes, displacing the stalled mRNA. The ribosome then switches to translate the ORF on the tmRNA; the nascent peptide is terminated with the 'tag peptide' encoded by the tmRNA and targeted for degradation. The ribosome is freed to recommence translation, which seems to be the essential function of trans-translation. This Methylococcus capsulatus (strain ATCC 33009 / NCIMB 11132 / Bath) protein is SsrA-binding protein.